The sequence spans 362 residues: Patr class I histocompatibility antigen, B-2 alpha chain (362 aa).

The first 24 residues, 1–24, serve as a signal peptide directing secretion; the sequence is MQVTAPRTVLLLLSAALALTETWA. The interval 25–114 is alpha-1; that stretch reads GSHSMKYFYT…LRGYYNQSEA (90 aa). The Extracellular portion of the chain corresponds to 25–308; that stretch reads GSHSMKYFYT…EPSSQSTIPI (284 aa). N110 carries an N-linked (GlcNAc...) asparagine glycan. Residues 115–206 form an alpha-2 region; that stretch reads GSHIIQRMYG…ENGKETLQRA (92 aa). 2 cysteine pairs are disulfide-bonded: C125–C188 and C227–C283. The alpha-3 stretch occupies residues 207-298; sequence DPPKTHVTHH…GLPKPLTLRW (92 aa). The region spanning 209-295 is the Ig-like C1-type domain; that stretch reads PKTHVTHHPI…QHEGLPKPLT (87 aa). Residues 299 to 308 form a connecting peptide region; that stretch reads EPSSQSTIPI. A helical membrane pass occupies residues 309–332; it reads VGIVAGLAVLAVVVIGAVVAAVMC. Residues 333–362 lie on the Cytoplasmic side of the membrane; that stretch reads RRKSSGGKGGSYSQAASSDSAQGSDVSLTA. Residues 336–362 form a disordered region; sequence SSGGKGGSYSQAASSDSAQGSDVSLTA. The span at 343–362 shows a compositional bias: low complexity; sequence SYSQAASSDSAQGSDVSLTA.

It belongs to the MHC class I family. In terms of assembly, heterodimer of an alpha chain and a beta chain (beta-2-microglobulin).

Its subcellular location is the membrane. Involved in the presentation of foreign antigens to the immune system. The protein is Patr class I histocompatibility antigen, B-2 alpha chain of Pan troglodytes (Chimpanzee).